Reading from the N-terminus, the 405-residue chain is Coenzyme F420 hydrogenase subunit alpha (405 aa).

Residues Cys63, Cys66, Cys380, and Cys383 each coordinate Ni(2+).

This sequence belongs to the [NiFe]/[NiFeSe] hydrogenase large subunit family. In terms of assembly, heterocomplex of the form (alpha(1)beta(1)gamma(1))(8). The cofactor is Ni(2+). Iron-sulfur cluster is required as a cofactor. Requires FAD as cofactor.

It carries out the reaction oxidized coenzyme F420-(gamma-L-Glu)(n) + H2 + H(+) = reduced coenzyme F420-(gamma-L-Glu)(n). In terms of biological role, reduces the physiological low-potential two-electron acceptor coenzyme F420, and the artificial one-electron acceptor methylviologen. The polypeptide is Coenzyme F420 hydrogenase subunit alpha (frhA) (Methanothermobacter thermautotrophicus (strain ATCC 29096 / DSM 1053 / JCM 10044 / NBRC 100330 / Delta H) (Methanobacterium thermoautotrophicum)).